Reading from the N-terminus, the 341-residue chain is UDP-glucose 4-epimerase (341 aa).

The protein belongs to the polysaccharide synthase family.

The catalysed reaction is UDP-alpha-D-glucose = UDP-alpha-D-galactose. In terms of biological role, epimerizes UDP-galactose to UDP-glucose. This chain is UDP-glucose 4-epimerase (capD), found in Rickettsia akari (strain Hartford).